Here is an 81-residue protein sequence, read N- to C-terminus: MSHSVKIYDTCIGCTQCVRACPLDVLEMVPWDGCKAGQIASSPRTEDCVGCKRCETACPTDFLSVRVYLGDETTRSMGLAY.

2 4Fe-4S ferredoxin-type domains span residues 2 to 31 and 37 to 68; these read SHSVKIYDTCIGCTQCVRACPLDVLEMVPW and GQIASSPRTEDCVGCKRCETACPTDFLSVRVY. [4Fe-4S] cluster is bound by residues C11, C14, C17, C21, C48, C51, C54, and C58.

As to quaternary structure, the cyanobacterial PSI reaction center is composed of one copy each of PsaA,B,C,D,E,F,I,J,K,L,M and X, and forms trimeric complexes. Requires [4Fe-4S] cluster as cofactor.

The protein localises to the cellular thylakoid membrane. The catalysed reaction is reduced [plastocyanin] + hnu + oxidized [2Fe-2S]-[ferredoxin] = oxidized [plastocyanin] + reduced [2Fe-2S]-[ferredoxin]. In terms of biological role, apoprotein for the two 4Fe-4S centers FA and FB of photosystem I (PSI); essential for photochemical activity. FB is the terminal electron acceptor of PSI, donating electrons to ferredoxin. The C-terminus interacts with PsaA/B/D and helps assemble the protein into the PSI complex. Required for binding of PsaD and PsaE to PSI. PSI is a plastocyanin/cytochrome c6-ferredoxin oxidoreductase, converting photonic excitation into a charge separation, which transfers an electron from the donor P700 chlorophyll pair to the spectroscopically characterized acceptors A0, A1, FX, FA and FB in turn. The protein is Photosystem I iron-sulfur center of Prochlorococcus marinus (strain SARG / CCMP1375 / SS120).